The primary structure comprises 414 residues: Zinc metalloproteinase nas-26 (414 aa).

The N-terminal stretch at 1–20 (MTSSLVLILAPLALVAIGEA) is a signal peptide. The propeptide occupies 21-61 (AFGNSSKIFEIPGLEVMASDKYPHFTTIETVSRTKVHRHRR). A glycan (N-linked (GlcNAc...) asparagine) is linked at N24. The Peptidase M12A domain maps to 62–264 (EVIAGQIYDW…AKVINDIYCP (203 aa)). Cystine bridges form between C103–C263, C126–C146, C267–C286, C289–C300, C308–C331, and C358–C378. H154 contributes to the Zn(2+) binding site. E155 is an active-site residue. Positions 158 and 164 each coordinate Zn(2+). The EGF-like domain occupies 251–307 (AFLDAKVINDIYCPNACQGRNHLNCLAGGYPDPNNCNVCRCPEGLGGPDCGRLQPSP). Residues 308-414 (CGGEIHASDQ…RFSLRFRRQA (107 aa)) form the CUB domain.

The cofactor is Zn(2+).

Its subcellular location is the secreted. Metalloprotease. The chain is Zinc metalloproteinase nas-26 (toh-1) from Caenorhabditis elegans.